The following is a 331-amino-acid chain: Autoinducer 2 import system permease protein LsrD (331 aa).

Helical transmembrane passes span Tyr-7 to Ser-27, Ile-45 to Ile-65, Phe-67 to Pro-87, Ile-90 to Ile-110, Leu-118 to Ile-138, Leu-162 to Leu-182, Thr-212 to Val-232, Ser-240 to Asn-260, Ile-261 to Leu-281, and Ile-288 to Val-308.

The protein belongs to the binding-protein-dependent transport system permease family. AraH/RbsC subfamily. In terms of assembly, the complex is composed of two ATP-binding proteins (LsrA), two transmembrane proteins (LsrC and LsrD) and a solute-binding protein (LsrB).

Its subcellular location is the cell inner membrane. Its function is as follows. Part of the ABC transporter complex LsrABCD involved in autoinducer 2 (AI-2) import. Probably responsible for the translocation of the substrate across the membrane. In Yersinia enterocolitica serotype O:8 / biotype 1B (strain NCTC 13174 / 8081), this protein is Autoinducer 2 import system permease protein LsrD (lsrD).